A 623-amino-acid chain; its full sequence is Chaperone protein DnaK (623 aa).

At T197 the chain carries Phosphothreonine; by autocatalysis. The segment at 600–623 (KKDENAGANGGNKKDDDVIDAEVE) is disordered.

The protein belongs to the heat shock protein 70 family.

In terms of biological role, acts as a chaperone. In Campylobacter concisus (strain 13826), this protein is Chaperone protein DnaK.